The sequence spans 837 residues: Translation initiation factor IF-2 (837 aa).

2 disordered regions span residues 1–44 (MTEK…VRKS) and 62–251 (KAQE…TKPA). Basic and acidic residues-rich tracts occupy residues 62–102 (KAQE…EAKP) and 111–165 (ADPE…HNDS). Positions 189–205 (RENHIRTGKNKVTKAKK) are enriched in basic residues. Positions 206 to 229 (GGRDDNGSKDERSADRRNQKDMRG) are enriched in basic and acidic residues. Polar residues predominate over residues 242–251 (TLQQAFTKPA). A tr-type G domain is found at 337–506 (QRAPVVTIMG…LLQSEVLELT (170 aa)). The G1 stretch occupies residues 346–353 (GHVDHGKT). 346-353 (GHVDHGKT) is a GTP binding site. The segment at 371 to 375 (GITQH) is G2. The interval 392–395 (DTPG) is G3. Residues 392–396 (DTPGH) and 446–449 (NKID) contribute to the GTP site. A G4 region spans residues 446–449 (NKID). Residues 482-484 (SAK) form a G5 region.

This sequence belongs to the TRAFAC class translation factor GTPase superfamily. Classic translation factor GTPase family. IF-2 subfamily.

It is found in the cytoplasm. Functionally, one of the essential components for the initiation of protein synthesis. Protects formylmethionyl-tRNA from spontaneous hydrolysis and promotes its binding to the 30S ribosomal subunits. Also involved in the hydrolysis of GTP during the formation of the 70S ribosomal complex. The sequence is that of Translation initiation factor IF-2 from Actinobacillus succinogenes (strain ATCC 55618 / DSM 22257 / CCUG 43843 / 130Z).